A 359-amino-acid chain; its full sequence is 3-dehydroquinate synthase (359 aa).

It belongs to the archaeal-type DHQ synthase family.

The enzyme catalyses 2-amino-2,3,7-trideoxy-D-lyxo-hept-6-ulosonate + NAD(+) + H2O = 3-dehydroquinate + NH4(+) + NADH + H(+). Functionally, catalyzes the oxidative deamination and cyclization of 2-amino-3,7-dideoxy-D-threo-hept-6-ulosonic acid (ADH) to yield 3-dehydroquinate (DHQ), which is fed into the canonical shikimic pathway of aromatic amino acid biosynthesis. In Methanosphaera stadtmanae (strain ATCC 43021 / DSM 3091 / JCM 11832 / MCB-3), this protein is 3-dehydroquinate synthase.